The sequence spans 400 residues: Unsaturated glucuronyl hydrolase (400 aa).

The N-terminal stretch at 1–20 (MRKLVYLVLVLGLTFLNVRC) is a signal peptide. Residue D120 is the Nucleophile of the active site. D181 functions as the Proton donor in the catalytic mechanism.

It belongs to the glycosyl hydrolase 88 family.

The protein localises to the cell surface. In terms of biological role, unsaturated glucuronyl hydrolase involved in ulvan degradation. Ulvan is the main polysaccharide component of the Ulvales (green seaweed) cell wall. It is composed of disaccharide building blocks comprising 3-sulfated rhamnose (Rha3S) linked to D-glucuronic acid (GlcA), L-iduronic acid (IduA), or D-xylose (Xyl). Unsaturated glucuronyl hydrolase catalyzes the cleavage of the unsaturated 4-deoxy-L-threo-hex-4-enopyranosiduronic acid (deltaUA) at the non-reducing end of ulvan oligomers, thus forming 5-dehydro-4-deoxy-D-glucuronate. The chain is Unsaturated glucuronyl hydrolase from Formosa agariphila (strain DSM 15362 / KCTC 12365 / LMG 23005 / KMM 3901 / M-2Alg 35-1).